Reading from the N-terminus, the 660-residue chain is Phosphatidylinositol-3-phosphate phosphatase MTMR7 (660 aa).

Residues 126–504 (GWVLIDLSEE…FMYKFWSGMY (379 aa)) enclose the Myotubularin phosphatase domain. Asn-250, Asn-275, and Ile-276 together coordinate a 1,2-diacyl-sn-glycero-3-phospho-(1D-myo-inositol-3-phosphate). Cys-338 (phosphocysteine intermediate) is an active-site residue. Residues Ser-339, Asp-340, Gly-341, Trp-342, Asp-343, Arg-344, and Arg-384 each contribute to the a 1,2-diacyl-sn-glycero-3-phospho-(1D-myo-inositol-3-phosphate) site. Positions 514–558 (RQSVTDYLMAVKEETQQLEEELEALEERLEKIQKVQLNCTKVKSK) form a coiled coil. Residues 554–660 (KVKSKQSEPS…DSDEAVFLTA (107 aa)) form a disordered region. Residues 566–596 (SGFSTSDNSIANTPQDYSGNMKSFPSRSPSQ) are compositionally biased toward polar residues. Residue Thr-578 is modified to Phosphothreonine. Positions 641 to 653 (APSEDSGKDRDSD) are enriched in basic and acidic residues.

This sequence belongs to the protein-tyrosine phosphatase family. Non-receptor class myotubularin subfamily. In terms of assembly, heterodimer (via C-terminus) with MTMR9 (via coiled coil domain); the interaction enhances MTMR7 catalytic activity. Does not homodimerize. Interacts with RAB1B (in GDP-bound form).

The protein resides in the cytoplasm. Its subcellular location is the endomembrane system. It carries out the reaction a 1,2-diacyl-sn-glycero-3-phospho-(1D-myo-inositol-3-phosphate) + H2O = a 1,2-diacyl-sn-glycero-3-phospho-(1D-myo-inositol) + phosphate. The enzyme catalyses 1D-myo-inositol 1,3-bisphosphate + H2O = 1D-myo-inositol 1-phosphate + phosphate. Interaction with MTMR9 increases phosphatase activity. Lipid phosphatase that specifically dephosphorylates the D-3 position of phosphatidylinositol 3-phosphate (PtdIns(3)P) and inositol 1,3-bisphosphate (Ins(1,3)P2). In Pongo abelii (Sumatran orangutan), this protein is Phosphatidylinositol-3-phosphate phosphatase MTMR7.